The primary structure comprises 644 residues: Translation factor guf1, mitochondrial (644 aa).

A mitochondrion-targeting transit peptide spans 1-31 (MTLRRFSYTFQARILRGLQARPVFVLPSRSH). The tr-type G domain maps to 51-232 (VNIRNWAIIS…AIIQRVPHPI (182 aa)). Residues 60–67 (SHIDHGKS), 125–129 (DTPGH), and 179–182 (NKID) contribute to the GTP site.

Belongs to the TRAFAC class translation factor GTPase superfamily. Classic translation factor GTPase family. LepA subfamily.

It is found in the mitochondrion inner membrane. The catalysed reaction is GTP + H2O = GDP + phosphate + H(+). Promotes mitochondrial protein synthesis. May act as a fidelity factor of the translation reaction, by catalyzing a one-codon backward translocation of tRNAs on improperly translocated ribosomes. Binds to mitochondrial ribosomes in a GTP-dependent manner. This chain is Translation factor guf1, mitochondrial (guf1), found in Schizosaccharomyces japonicus (strain yFS275 / FY16936) (Fission yeast).